The primary structure comprises 156 residues: MKKSCIYPGTFDPITNGHLDVIIRATKIFDKVIVAVAKSDSKQPMFAHEKRIEMAKEAVCELKNVSVLGFDNLLVDFAKSHGINTVIRGLRAVSDFEYELQIGYANAALWDEFETVYLMPSLNNAFISSSIVRSVLRHDGDVSNLVPAKILKNLKA.

Thr-10 contacts substrate. ATP-binding positions include 10–11 (TF) and His-18. Substrate is bound by residues Lys-42, Leu-74, and Arg-88. Residues 89–91 (GLR), Glu-99, and 124–130 (NAFISSS) contribute to the ATP site.

It belongs to the bacterial CoaD family. In terms of assembly, homohexamer. It depends on Mg(2+) as a cofactor.

It is found in the cytoplasm. The catalysed reaction is (R)-4'-phosphopantetheine + ATP + H(+) = 3'-dephospho-CoA + diphosphate. It participates in cofactor biosynthesis; coenzyme A biosynthesis; CoA from (R)-pantothenate: step 4/5. Reversibly transfers an adenylyl group from ATP to 4'-phosphopantetheine, yielding dephospho-CoA (dPCoA) and pyrophosphate. The chain is Phosphopantetheine adenylyltransferase from Campylobacter concisus (strain 13826).